We begin with the raw amino-acid sequence, 579 residues long: Trehalase (579 aa).

The signal sequence occupies residues 1–15 (MRLFLLLVGLTTVIA). N-linked (GlcNAc...) asparagine glycosylation is found at N29 and N58. Residues R161, 168 to 169 (WD), N205, 214 to 216 (RSQ), 279 to 281 (RPE), and G313 each bind substrate. N-linked (GlcNAc...) asparagine glycosylation is present at N205. Catalysis depends on D315, which acts as the Proton donor/acceptor. An N-linked (GlcNAc...) asparagine glycan is attached at N331. The Proton donor/acceptor role is filled by E513. Position 528 (E528) interacts with substrate. A compositionally biased stretch (polar residues) spans 560 to 569 (DASANNGQSN). Positions 560–579 (DASANNGQSNEESETDSKEK) are disordered.

Belongs to the glycosyl hydrolase 37 family. As to expression, in midgut and Malpighian tubules.

It localises to the basolateral cell membrane. It catalyses the reaction alpha,alpha-trehalose + H2O = alpha-D-glucose + beta-D-glucose. Involved in uptake of hemolymph trehalose into epithelial cells in the midgut of feeding larvae. This chain is Trehalase, found in Bombyx mori (Silk moth).